Here is a 478-residue protein sequence, read N- to C-terminus: Phosphomannomutase (478 aa).

The chain crosses the membrane as a helical span at residues 30–46 (FTPEVCARFTISFLTVM). Serine 111 functions as the Phosphoserine intermediate in the catalytic mechanism. The Mg(2+) site is built by serine 111, aspartate 245, aspartate 247, and aspartate 249. Residues 265 to 284 (ILGLLCSLELAADAVAIPVS) traverse the membrane as a helical segment.

Belongs to the phosphohexose mutase family. It depends on Mg(2+) as a cofactor.

It localises to the cell membrane. It carries out the reaction alpha-D-mannose 1-phosphate = D-mannose 6-phosphate. It participates in nucleotide-sugar biosynthesis; GDP-alpha-D-mannose biosynthesis; alpha-D-mannose 1-phosphate from D-fructose 6-phosphate: step 2/2. It functions in the pathway bacterial outer membrane biogenesis; LPS O-antigen biosynthesis. In terms of biological role, involved in GDP-mannose biosynthesis which serves as the activated sugar nucleotide precursor for mannose residues in cell surface polysaccharides. This enzyme participates in synthesis of the LPS group C2 O antigen. The protein is Phosphomannomutase (manB) of Salmonella muenchen.